Reading from the N-terminus, the 525-residue chain is Ribosomal protein S6 kinase beta-1 (525 aa).

The TOS motif motif lies at 28–32 (FDIDL). The interval 28 to 54 (FDIDLDQPEDAGSEDELEEGGQLNESM) is disordered. Over residues 30–46 (IDLDQPEDAGSEDELEE) the composition is skewed to acidic residues. A Protein kinase domain is found at 91 to 352 (FELLRVLGKG…AGEVQAHPFF (262 aa)). ATP contacts are provided by residues 97–105 (LGKGGYGKV) and Lys-123. Asp-218 functions as the Proton acceptor in the catalytic mechanism. Thr-252 bears the Phosphothreonine; by PDPK1 mark. One can recognise an AGC-kinase C-terminal domain in the interval 353-423 (RHINWEELLA…VAPSVLESVK (71 aa)). Residues 380-399 (SQFDSKFTRQTPVDSPDDST) form a disordered region. The segment covering 381–399 (QFDSKFTRQTPVDSPDDST) has biased composition (polar residues). Ser-394 bears the Phosphoserine mark. Thr-412 is modified (phosphothreonine; by MTOR, NEK6 and NEK7). Residues 424–525 (EKFSFEPKIR…KRPEHLRMNL (102 aa)) form an autoinhibitory domain region. 2 positions are modified to phosphoserine: Ser-434 and Ser-441. Phosphothreonine is present on Thr-444. Phosphoserine occurs at positions 447 and 452. The interval 486–509 (VTTSGEASAPLPIRQPNSGPYKKQ) is disordered. The residue at position 516 (Lys-516) is an N6-acetyllysine.

Belongs to the protein kinase superfamily. AGC Ser/Thr protein kinase family. S6 kinase subfamily. In terms of assembly, interacts with PPP1R9A/neurabin-1. Interacts with RPTOR. Interacts with IRS1. Interacts with EIF3B and EIF3C. Interacts with POLDIP3. Interacts with TRAF4. Interacts (via N-terminus) with IER5. Dephosphorylation by PPP1CC at Thr-412 in mitochondrion. Phosphorylation at Thr-412 is regulated by mTORC1. The phosphorylation at this site is maintained by an agonist-dependent autophosphorylation mechanism. Activated by phosphorylation at Thr-252 by PDPK1. In terms of tissue distribution, brain.

The protein localises to the cytoplasm. The protein resides in the synapse. It is found in the synaptosome. Its subcellular location is the mitochondrion outer membrane. It localises to the mitochondrion. It catalyses the reaction L-seryl-[protein] + ATP = O-phospho-L-seryl-[protein] + ADP + H(+). The enzyme catalyses L-threonyl-[protein] + ATP = O-phospho-L-threonyl-[protein] + ADP + H(+). Its activity is regulated as follows. Activation requires multiple phosphorylation events on serine/threonine residues. Activation appears to be first mediated by phosphorylation of multiple sites in the autoinhibitory domain, which facilitates phosphorylation at Thr-412, disrupting the autoinhibitory mechanism and allowing phosphorylation of Thr-252 by PDPK1. The active conformation of the kinase is believed to be stabilized by a mechanism involving three conserved phosphorylation sites located in the kinase domain activation loop (Thr-252) and in the AGC-kinase C-terminal domain (Ser-394 in the middle of the tail/linker region and Thr-412 within a hydrophobic motif at its end). Activated by mTORC1; isoform Alpha I and isoform Alpha II are sensitive to rapamycin, which inhibits activating phosphorylation at Thr-412. Activated by PDPK1. In terms of biological role, serine/threonine-protein kinase that acts downstream of mTOR signaling in response to growth factors and nutrients to promote cell proliferation, cell growth and cell cycle progression. Regulates protein synthesis through phosphorylation of EIF4B, RPS6 and EEF2K, and contributes to cell survival by repressing the pro-apoptotic function of BAD. Under conditions of nutrient depletion, the inactive form associates with the EIF3 translation initiation complex. Upon mitogenic stimulation, phosphorylation by the mechanistic target of rapamycin complex 1 (mTORC1) leads to dissociation from the EIF3 complex and activation. The active form then phosphorylates and activates several substrates in the pre-initiation complex, including the EIF2B complex and the cap-binding complex component EIF4B. Also controls translation initiation by phosphorylating a negative regulator of EIF4A, PDCD4, targeting it for ubiquitination and subsequent proteolysis. Promotes initiation of the pioneer round of protein synthesis by phosphorylating POLDIP3/SKAR. In response to IGF1, activates translation elongation by phosphorylating EEF2 kinase (EEF2K), which leads to its inhibition and thus activation of EEF2. Also plays a role in feedback regulation of mTORC2 by mTORC1 by phosphorylating MAPKAP1/SIN1, MTOR and RICTOR, resulting in the inhibition of mTORC2 and AKT1 signaling. Also involved in feedback regulation of mTORC1 and mTORC2 by phosphorylating DEPTOR. Mediates cell survival by phosphorylating the pro-apoptotic protein BAD and suppressing its pro-apoptotic function. Phosphorylates mitochondrial URI1 leading to dissociation of a URI1-PPP1CC complex. The free mitochondrial PPP1CC can then dephosphorylate RPS6KB1 at Thr-412, which is proposed to be a negative feedback mechanism for the RPS6KB1 anti-apoptotic function. Mediates TNF-alpha-induced insulin resistance by phosphorylating IRS1 at multiple serine residues, resulting in accelerated degradation of IRS1. In cells lacking functional TSC1-2 complex, constitutively phosphorylates and inhibits GSK3B. May be involved in cytoskeletal rearrangement through binding to neurabin. Phosphorylates and activates the pyrimidine biosynthesis enzyme CAD, downstream of MTOR. Following activation by mTORC1, phosphorylates EPRS and thereby plays a key role in fatty acid uptake by adipocytes and also most probably in interferon-gamma-induced translation inhibition. The protein is Ribosomal protein S6 kinase beta-1 (Rps6kb1) of Rattus norvegicus (Rat).